The following is a 106-amino-acid chain: Cell division protein FtsB (106 aa).

Over 1–3 (MGK) the chain is Cytoplasmic. Residues 4-21 (LTLLLLVLLGWLQYSLWL) traverse the membrane as a helical segment. Over 22 to 106 (GKNGIHDYVR…SRPSTPNNTQ (85 aa)) the chain is Periplasmic. A coiled-coil region spans residues 29 to 70 (YVRVKNDVAMQERNNSKLKARNDQLSAEIDDLTGGQEAIEER).

It belongs to the FtsB family. As to quaternary structure, part of a complex composed of FtsB, FtsL and FtsQ.

It is found in the cell inner membrane. Essential cell division protein. May link together the upstream cell division proteins, which are predominantly cytoplasmic, with the downstream cell division proteins, which are predominantly periplasmic. This Photorhabdus laumondii subsp. laumondii (strain DSM 15139 / CIP 105565 / TT01) (Photorhabdus luminescens subsp. laumondii) protein is Cell division protein FtsB.